The sequence spans 423 residues: UDP-N-acetylglucosamine 1-carboxyvinyltransferase (423 aa).

22-23 (KN) is a binding site for phosphoenolpyruvate. A UDP-N-acetyl-alpha-D-glucosamine-binding site is contributed by Arg-98. Cys-122 acts as the Proton donor in catalysis. Cys-122 carries the post-translational modification 2-(S-cysteinyl)pyruvic acid O-phosphothioketal. UDP-N-acetyl-alpha-D-glucosamine contacts are provided by residues 127–131 (RPVDQ), Asp-311, and Ile-333.

The protein belongs to the EPSP synthase family. MurA subfamily.

The protein localises to the cytoplasm. It catalyses the reaction phosphoenolpyruvate + UDP-N-acetyl-alpha-D-glucosamine = UDP-N-acetyl-3-O-(1-carboxyvinyl)-alpha-D-glucosamine + phosphate. It participates in cell wall biogenesis; peptidoglycan biosynthesis. Functionally, cell wall formation. Adds enolpyruvyl to UDP-N-acetylglucosamine. The sequence is that of UDP-N-acetylglucosamine 1-carboxyvinyltransferase from Stenotrophomonas maltophilia (strain R551-3).